Consider the following 88-residue polypeptide: MGTARFLSAVLLLSVPLMVTFPALLSAEYHDGRVDICSLPSDSGDCLRFFEMWYFDGTTCTKFVYGGYGGNDNRFPTEKACMKRCAKA.

A signal peptide spans 1 to 27; it reads MGTARFLSAVLLLSVPLMVTFPALLSA. Residues 28 to 33 constitute a propeptide that is removed on maturation; that stretch reads EYHDGR. Residues 37–85 form the BPTI/Kunitz inhibitor domain; the sequence is CSLPSDSGDCLRFFEMWYFDGTTCTKFVYGGYGGNDNRFPTEKACMKRC. Disulfide bonds link Cys37/Cys85 and Cys60/Cys81.

Belongs to the venom Kunitz-type family. 03 (sub-Kunitz) subfamily. As to expression, expressed by the venom gland.

The protein localises to the secreted. In terms of biological role, serine protease inhibitor that inhibits trypsin at a molar ratio of 1:1. The protein is Kunitz-type U15-theraphotoxin-Hs1a of Cyriopagopus schmidti (Chinese bird spider).